The sequence spans 145 residues: Cell division protein SepF (145 aa).

A compositionally biased stretch (basic and acidic residues) spans 23–41 (PQEVSKTKDENAKPKHETP). The tract at residues 23–42 (PQEVSKTKDENAKPKHETPK) is disordered.

The protein belongs to the SepF family. As to quaternary structure, homodimer. Interacts with FtsZ.

It is found in the cytoplasm. Cell division protein that is part of the divisome complex and is recruited early to the Z-ring. Probably stimulates Z-ring formation, perhaps through the cross-linking of FtsZ protofilaments. Its function overlaps with FtsA. The chain is Cell division protein SepF from Caldicellulosiruptor bescii (strain ATCC BAA-1888 / DSM 6725 / KCTC 15123 / Z-1320) (Anaerocellum thermophilum).